The chain runs to 479 residues: Cysteine--tRNA ligase (479 aa).

Cys-29 lines the Zn(2+) pocket. The 'HIGH' region motif lies at 31 to 41 (ATVQGAPHIGH). The interval 171 to 197 (QRVEDMQDAPDADPRGKRDPRDFALWK) is disordered. Residues 182 to 197 (ADPRGKRDPRDFALWK) show a composition bias toward basic and acidic residues. Residues Cys-224, His-249, and Glu-253 each coordinate Zn(2+). A 'KMSKS' region motif is present at residues 280–284 (KMSKS). ATP is bound at residue Lys-283.

Belongs to the class-I aminoacyl-tRNA synthetase family. Monomer. Requires Zn(2+) as cofactor.

Its subcellular location is the cytoplasm. The catalysed reaction is tRNA(Cys) + L-cysteine + ATP = L-cysteinyl-tRNA(Cys) + AMP + diphosphate. The chain is Cysteine--tRNA ligase from Kocuria rhizophila (strain ATCC 9341 / DSM 348 / NBRC 103217 / DC2201).